Reading from the N-terminus, the 78-residue chain is Acyl carrier protein (78 aa).

Residues 1–75 (MIKEKILSIV…DLISVVKNST (75 aa)) form the Carrier domain. S35 carries the post-translational modification O-(pantetheine 4'-phosphoryl)serine.

It belongs to the acyl carrier protein (ACP) family. 4'-phosphopantetheine is transferred from CoA to a specific serine of apo-ACP by AcpS. This modification is essential for activity because fatty acids are bound in thioester linkage to the sulfhydryl of the prosthetic group.

The protein resides in the cytoplasm. It functions in the pathway lipid metabolism; fatty acid biosynthesis. In terms of biological role, carrier of the growing fatty acid chain in fatty acid biosynthesis. The sequence is that of Acyl carrier protein (acpP) from Shigella flexneri.